Reading from the N-terminus, the 947-residue chain is MEGKVFSGQKLILVMLLLGHLHGFSSCIEKERKALLELKKFVMSRCEECEYDSVLPTWTNDTKSDCCQWENIKCNRTSRRLTGLSLYTSYYLEISLLNLSLLHPFEEVRSLDLSNSRLNGLVDDVEGYKSLRRLRNLQILNFSSNEFNNSIFPFLNAATSLTTLSLRRNNMYGPIPLKELKNLTNLELLDLSGNRIDGSMPVREFPYLKKLKALDLSSNGIYSSMEWQGLKNLTNLEVLSLGYNYFDGPIPIEVFCEMKNLQELDLRGINFVGQLPLCFGNLNKLRFLDLSSNQLTGNIPPSFSSLESLEYLSLSDNSFEGFFSLNPLTNLTKLKVFIFSSKDDMVQVKIESTWQPLFQLSVLVLRLCSLEKIPNFLMYQKNLHVVDLSGNRISGIIPTWLLENNPELEVLQLKNNSFTIFQMPTSVHNLQVLDFSENNIGGLFPDNFGRVLPNLVHMNGSNNGFQGNFPSSMGEMYNISFLDLSYNNLSGELPQSFVSSCFSLSILQLSHNKFSGHFLPRQTNFTSLIVLRINNNLFTGKIGVGLLTLVDLCILDMSNNFLEGELPPLLLVFEYLNFLDLSGNLLSGALPSHVSLDNVLFLHNNNFTGPIPDTFLGSIQILDLRNNKLSGNIPQFVDTQDISFLLLRGNSLTGYIPSTLCEFSKMRLLDLSDNKLNGFIPSCFNNLSFGLARKEEITNYYVAVALESFYLGFYKSTFVVENFRLDYSNYFEIDVKFATKQRYDSYIGAFQFSEGTLNSMYGLDLSSNELSGVIPAELGDLFKLRALNLSHNFLSSHIPDSFSKLQDIESLDLSYNMLQGSIPHQLTNLTSLAIFNVSYNNLSGIIPQGKQFNTFDENSYLGNPLLCGPPTDTSCETKKNSEENANGGEEDDKEVAIDMLVFYWSTAGTYVTALIGILVLMCVDCSWRRAWLRLVDAFIASAKSKLA.

The N-terminal stretch at 1 to 27 (MEGKVFSGQKLILVMLLLGHLHGFSSC) is a signal peptide. Topologically, residues 28 to 899 (IEKERKALLE…EDDKEVAIDM (872 aa)) are extracellular. N60, N75, and N98 each carry an N-linked (GlcNAc...) asparagine glycan. LRR repeat units lie at residues 105–128 (FEEV…VEGY), 134–157 (LRNL…FLNA), 159–182 (TSLT…ELKN), 183–207 (LTNL…EFPY), 209–232 (KKLK…GLKN), 233–257 (LTNL…VFCE), 259–281 (KNLQ…CFGN), 282–305 (LNKL…SFSS), and 307–330 (ESLE…PLTN). 3 N-linked (GlcNAc...) asparagine glycosylation sites follow: N141, N148, and N182. The N-linked (GlcNAc...) asparagine glycan is linked to N232. N-linked (GlcNAc...) asparagine glycosylation is present at N330. Residues 332-356 (TKLKVFIFSSKDDMVQVKIESTWQP) form an LRR 10; degenerate repeat. LRR repeat units follow at residues 357 to 380 (LFQL…LMYQ), 381 to 404 (KNLH…LLEN), 405 to 427 (NPEL…PTSV), 428 to 450 (HNLQ…NFGR), 452 to 476 (LPNL…MGEM), 477 to 500 (YNIS…FVSS), 502 to 527 (FSLS…NFTS), 529 to 549 (IVLR…LLTL), 550 to 575 (VDLC…VFEY), 577 to 598 (NFLD…SLDN), 600 to 616 (LFLH…DTFL), 617 to 640 (GSIQ…VDTQ), 642 to 663 (ISFL…LCEF), 664 to 686 (SKMR…CFNN), 757 to 780 (LNSM…ELGD), 781 to 804 (LFKL…SFSK), 805 to 829 (LQDI…LTNL), and 831 to 854 (SLAI…QFNT). Residue N415 is glycosylated (N-linked (GlcNAc...) asparagine). Residues N459, N478, N488, and N524 are each glycosylated (N-linked (GlcNAc...) asparagine). A glycan (N-linked (GlcNAc...) asparagine) is linked at N606. N686 carries N-linked (GlcNAc...) asparagine glycosylation. 4 N-linked (GlcNAc...) asparagine glycosylation sites follow: N788, N828, N836, and N841. Residues 900–920 (LVFYWSTAGTYVTALIGILVL) form a helical membrane-spanning segment. Topologically, residues 921 to 947 (MCVDCSWRRAWLRLVDAFIASAKSKLA) are cytoplasmic.

It belongs to the RLP family.

The protein resides in the cell membrane. The chain is Receptor-like protein 56 from Arabidopsis thaliana (Mouse-ear cress).